Reading from the N-terminus, the 99-residue chain is Large ribosomal subunit protein eL30 (99 aa).

It belongs to the eukaryotic ribosomal protein eL30 family.

The chain is Large ribosomal subunit protein eL30 (rpl30e) from Pyrococcus horikoshii (strain ATCC 700860 / DSM 12428 / JCM 9974 / NBRC 100139 / OT-3).